Reading from the N-terminus, the 577-residue chain is Steryl-sulfatase (577 aa).

The signal sequence occupies residues 1-19 (MLWPCLLALLLSQLNFLCA). The Lumenal segment spans residues 21 to 183 (RPGPGPNFLL…GTVFGSAQQV (163 aa)). Ca(2+)-binding residues include aspartate 34 and aspartate 35. Asparagine 46 is a glycosylation site (N-linked (GlcNAc...) asparagine). Ca(2+) is bound at residue cysteine 74. The Nucleophile role is filled by cysteine 74. Cysteine 74 carries the post-translational modification 3-oxoalanine (Cys). Histidine 135 is an active-site residue. 2 disulfide bridges follow: cysteine 140-cysteine 147 and cysteine 169-cysteine 241. A helical membrane pass occupies residues 184 to 207 (FVVLPMNILGAVLLAMALARWAGL). Residues 208–211 (ARPP) are Cytoplasmic-facing. A helical transmembrane segment spans residues 212 to 233 (GWVFGVTVAAMAAVGGAYVAFL). At 234-577 (YHFRPANCFL…PLACRCAGDG (344 aa)) the chain is on the lumenal side. N-linked (GlcNAc...) asparagine glycosylation is present at asparagine 332. Residues aspartate 341 and histidine 342 each coordinate Ca(2+). 3 disulfide bridges follow: cysteine 445/cysteine 488, cysteine 480/cysteine 486, and cysteine 561/cysteine 571. N-linked (GlcNAc...) asparagine glycosylation occurs at asparagine 458.

This sequence belongs to the sulfatase family. As to quaternary structure, homodimer. The cofactor is Ca(2+). In terms of processing, the conversion to 3-oxoalanine (also known as C-formylglycine, FGly), of a serine or cysteine residue in prokaryotes and of a cysteine residue in eukaryotes, is critical for catalytic activity.

The protein resides in the microsome membrane. It is found in the endoplasmic reticulum membrane. It catalyses the reaction dehydroepiandrosterone 3-sulfate + H2O = 3beta-hydroxyandrost-5-en-17-one + sulfate + H(+). It carries out the reaction estrone 3-sulfate + H2O = estrone + sulfate + H(+). Its function is as follows. Catalyzes the conversion of sulfated steroid precursors, such as dehydroepiandrosterone sulfate (DHEA-S) and estrone sulfate to the free steroid. In Rattus norvegicus (Rat), this protein is Steryl-sulfatase (Sts).